The primary structure comprises 169 residues: GTP-dependent dephospho-CoA kinase (169 aa).

Residues D45, D64, and E121 each contribute to the GTP site.

It belongs to the GTP-dependent DPCK family.

The catalysed reaction is 3'-dephospho-CoA + GTP = GDP + CoA + H(+). The protein operates within cofactor biosynthesis; coenzyme A biosynthesis. Catalyzes the GTP-dependent phosphorylation of the 3'-hydroxyl group of dephosphocoenzyme A to form coenzyme A (CoA). The protein is GTP-dependent dephospho-CoA kinase of Methanobrevibacter smithii (strain ATCC 35061 / DSM 861 / OCM 144 / PS).